We begin with the raw amino-acid sequence, 298 residues long: tRNA pseudouridine synthase B (298 aa).

The active-site Nucleophile is the Asp39.

The protein belongs to the pseudouridine synthase TruB family. Type 1 subfamily.

It catalyses the reaction uridine(55) in tRNA = pseudouridine(55) in tRNA. Responsible for synthesis of pseudouridine from uracil-55 in the psi GC loop of transfer RNAs. The chain is tRNA pseudouridine synthase B from Oenococcus oeni (strain ATCC BAA-331 / PSU-1).